The primary structure comprises 261 residues: Ribosomal RNA small subunit methyltransferase J (261 aa).

S-adenosyl-L-methionine is bound by residues 109–110, 125–126, and aspartate 179; these read RD and ER.

It belongs to the methyltransferase superfamily. RsmJ family.

The protein resides in the cytoplasm. It carries out the reaction guanosine(1516) in 16S rRNA + S-adenosyl-L-methionine = N(2)-methylguanosine(1516) in 16S rRNA + S-adenosyl-L-homocysteine + H(+). Specifically methylates the guanosine in position 1516 of 16S rRNA. The sequence is that of Ribosomal RNA small subunit methyltransferase J from Pseudomonas aeruginosa (strain UCBPP-PA14).